The following is an 825-amino-acid chain: Zinc finger protein 229 (825 aa).

The segment at 1-26 is disordered; it reads METLTSRHEKRALHSQASAISQDREE. Residues 34 to 108 form the KRAB domain; sequence LSFKDVAVVF…SHKELSSCKI (75 aa). Residues 291–315 form a C2H2-type 1; degenerate zinc finger; the sequence is KLCQYDEFSEGLRHSAHLNRHQRVP. C2H2-type zinc fingers lie at residues 349-371, 377-399, 405-427, 433-455, 461-483, 489-511, and 517-539; these read YRCDVCGKGFRYKSVLLIHQGVH, YKCEECGKAFGRSSNLLVHQRVH, YKCSECGKGFSYSSVLQVHQRLH, YTCSECGKGFCAKSALHKHQHIH, YSCGECGKGFSCSSHLSSHQKTH, YQCDKCGKGFSHNSYLQAHQRVH, and YKCNVCGKSFSYSSGLLMHQRLH. K543 is covalently cross-linked (Glycyl lysine isopeptide (Lys-Gly) (interchain with G-Cter in SUMO2)). C2H2-type zinc fingers lie at residues 545-566, 572-594, 600-622, 628-650, 656-678, 684-706, 712-734, 740-762, 768-790, and 796-818; these read YKCECGKSFGRSSDLHIHQRVH, YKCSECGKGFRRNSDLHSHQRVH, YVCDVCGKGFIYSSDLLIHQRVH, YKCAECGKGFSYSSGLLIHQRVH, YRCQECGKGFRCTSSLHKHQRVH, YTCDQCGKGFSYGSNLRTHQRLH, YTCCECGKGFRYGSGLLSHKRVH, YRCHVCGKGYSQSSHLQGHQRVH, YKCEECGKGFGRNSCLHVHQRVH, and YTCGVCGKGFSYTSGLRNHQRVH.

Belongs to the krueppel C2H2-type zinc-finger protein family.

The protein resides in the nucleus. Functionally, may be involved in transcriptional regulation. The sequence is that of Zinc finger protein 229 from Homo sapiens (Human).